Reading from the N-terminus, the 112-residue chain is 2Fe-2S ferredoxin (112 aa).

Residues 5–107 (IKVTFIINDG…GIKVHLPAAT (103 aa)) form the 2Fe-2S ferredoxin-type domain. Residues Cys-42, Cys-48, Cys-51, and Cys-88 each contribute to the [2Fe-2S] cluster site.

It belongs to the adrenodoxin/putidaredoxin family. [2Fe-2S] cluster is required as a cofactor.

Its function is as follows. Ferredoxin are iron-sulfur proteins that transfer electrons in a wide variety of metabolic reactions. The protein is 2Fe-2S ferredoxin (fdxB) of Rickettsia rickettsii.